Consider the following 655-residue polypeptide: Probable glucan endo-1,3-beta-glucosidase btgC (655 aa).

Disordered regions lie at residues Met1 to Gly61 and Ser89 to Asp114. Over Met1 to Arg282 the chain is Cytoplasmic. Residues Asp19–Asp33 show a composition bias toward polar residues. A compositionally biased stretch (basic and acidic residues) spans Ser89–Asp98. Residues Gly283–Val303 form a helical; Signal-anchor for type II membrane protein membrane-spanning segment. The Extracellular segment spans residues Gly304–Thr655. The disordered stretch occupies residues Gly305–Ile338. The span at Gly323–Ile338 shows a compositional bias: basic and acidic residues. The N-linked (GlcNAc...) asparagine glycan is linked to Asn426. Glu458 functions as the Proton donor in the catalytic mechanism. Glu557 acts as the Nucleophile in catalysis. 2 N-linked (GlcNAc...) asparagine glycosylation sites follow: Asn576 and Asn602.

It belongs to the glycosyl hydrolase 17 family.

It localises to the cell membrane. The enzyme catalyses Hydrolysis of (1-&gt;3)-beta-D-glucosidic linkages in (1-&gt;3)-beta-D-glucans.. In terms of biological role, glucanases play a role in cell expansion during growth, in cell-cell fusion during mating, and in spore release during sporulation. This enzyme may be involved in beta-glucan degradation. Active on laminarin and lichenan. This is Probable glucan endo-1,3-beta-glucosidase btgC (btgC) from Aspergillus terreus (strain NIH 2624 / FGSC A1156).